We begin with the raw amino-acid sequence, 940 residues long: Translation initiation factor IF-2 (940 aa).

2 stretches are compositionally biased toward low complexity: residues 138–147 (APVEVVAEPE) and 161–208 (PVVV…ITEL). The segment at 138–354 (APVEVVAEPE…DRQTFQAPTE (217 aa)) is disordered. Basic and acidic residues-rich tracts occupy residues 214 to 271 (IAAR…EEAA) and 289 to 311 (AKAD…DGAK). In terms of domain architecture, tr-type G spans 440–609 (PRAPVVTVMG…LLQAEVLELT (170 aa)). A G1 region spans residues 449-456 (GHVDHGKT). 449-456 (GHVDHGKT) serves as a coordination point for GTP. Residues 474–478 (GITQH) form a G2 region. Residues 495–498 (DTPG) form a G3 region. GTP-binding positions include 495–499 (DTPGH) and 549–552 (TKID). Positions 549–552 (TKID) are G4. A G5 region spans residues 585-587 (SAK).

The protein belongs to the TRAFAC class translation factor GTPase superfamily. Classic translation factor GTPase family. IF-2 subfamily.

The protein resides in the cytoplasm. In terms of biological role, one of the essential components for the initiation of protein synthesis. Protects formylmethionyl-tRNA from spontaneous hydrolysis and promotes its binding to the 30S ribosomal subunits. Also involved in the hydrolysis of GTP during the formation of the 70S ribosomal complex. This is Translation initiation factor IF-2 from Azoarcus sp. (strain BH72).